Reading from the N-terminus, the 257-residue chain is MIGRERMTVASQRLIAERTYELTLSGRLVQEMRQPGQFVHVKVAASADPLLRRPLSLCHIDHKQGQCTIIYRQEGKGTALLAQKQPGDTVDVLGPLGNGFPLEAAPADSRALLVGGGIGVPPLYELAKQLTKRGVKVVSVLGFQTKAAVFYEEEFAAFGETHVATDDGSHGTAGRVTDVIEARSLEFDVLYACGPKPMLRALAERFPNRPVYLSLEERMGCGVGACFACVCHVPGSETAYKKVCSDGPVFRAGEVVL.

One can recognise an FAD-binding FR-type domain in the interval 2–102 (IGRERMTVAS…LGPLGNGFPL (101 aa)). Residues 53 to 56 (RPLS), 70 to 72 (IYR), and 77 to 78 (GT) each bind FAD. [2Fe-2S] cluster-binding residues include Cys-221, Cys-226, Cys-229, and Cys-244.

It belongs to the PyrK family. As to quaternary structure, heterotetramer of 2 PyrK and 2 PyrD type B subunits. [2Fe-2S] cluster is required as a cofactor. It depends on FAD as a cofactor.

Its pathway is pyrimidine metabolism; UMP biosynthesis via de novo pathway; orotate from (S)-dihydroorotate (NAD(+) route): step 1/1. Functionally, responsible for channeling the electrons from the oxidation of dihydroorotate from the FMN redox center in the PyrD type B subunit to the ultimate electron acceptor NAD(+). The chain is Dihydroorotate dehydrogenase B (NAD(+)), electron transfer subunit from Geobacillus kaustophilus (strain HTA426).